Reading from the N-terminus, the 260-residue chain is 3'-5' ssDNA/RNA exonuclease TatD (260 aa).

Residues E92, H128, and H153 each coordinate a divalent metal cation.

It belongs to the metallo-dependent hydrolases superfamily. TatD-type hydrolase family. TatD subfamily. As to quaternary structure, monomer. The cofactor is Mg(2+).

It localises to the cytoplasm. Functionally, 3'-5' exonuclease that prefers single-stranded DNA and RNA. May play a role in the H(2)O(2)-induced DNA damage repair. This is 3'-5' ssDNA/RNA exonuclease TatD from Pantoea ananatis (strain LMG 20103).